Consider the following 505-residue polypeptide: ATP synthase subunit alpha (505 aa).

ATP is bound at residue 170–177 (GDRQTGKS).

Belongs to the ATPase alpha/beta chains family. In terms of assembly, F-type ATPases have 2 components, CF(1) - the catalytic core - and CF(0) - the membrane proton channel. CF(1) has five subunits: alpha(3), beta(3), gamma(1), delta(1), epsilon(1). CF(0) has four main subunits: a(1), b(1), b'(1) and c(9-12).

It is found in the cellular thylakoid membrane. The enzyme catalyses ATP + H2O + 4 H(+)(in) = ADP + phosphate + 5 H(+)(out). Its function is as follows. Produces ATP from ADP in the presence of a proton gradient across the membrane. The alpha chain is a regulatory subunit. This Prochlorococcus marinus (strain AS9601) protein is ATP synthase subunit alpha.